A 709-amino-acid polypeptide reads, in one-letter code: Elongation factor G (709 aa).

Positions 10–295 constitute a tr-type G domain; the sequence is NQVRNIGIMA…AVVDYLPSPE (286 aa). GTP contacts are provided by residues 19 to 26, 91 to 95, and 145 to 148; these read AHIDAGKT, DTPGH, and NKMD.

This sequence belongs to the TRAFAC class translation factor GTPase superfamily. Classic translation factor GTPase family. EF-G/EF-2 subfamily.

The protein localises to the cytoplasm. Functionally, catalyzes the GTP-dependent ribosomal translocation step during translation elongation. During this step, the ribosome changes from the pre-translocational (PRE) to the post-translocational (POST) state as the newly formed A-site-bound peptidyl-tRNA and P-site-bound deacylated tRNA move to the P and E sites, respectively. Catalyzes the coordinated movement of the two tRNA molecules, the mRNA and conformational changes in the ribosome. The sequence is that of Elongation factor G from Bifidobacterium animalis subsp. lactis (strain AD011).